Reading from the N-terminus, the 209-residue chain is Large ribosomal subunit protein uL3 (209 aa).

The protein belongs to the universal ribosomal protein uL3 family. Part of the 50S ribosomal subunit. Forms a cluster with proteins L14 and L19.

In terms of biological role, one of the primary rRNA binding proteins, it binds directly near the 3'-end of the 23S rRNA, where it nucleates assembly of the 50S subunit. In Nitratidesulfovibrio vulgaris (strain DSM 19637 / Miyazaki F) (Desulfovibrio vulgaris), this protein is Large ribosomal subunit protein uL3.